A 450-amino-acid polypeptide reads, in one-letter code: Phosphoglucosamine mutase (450 aa).

Serine 101 acts as the Phosphoserine intermediate in catalysis. Residues serine 101, aspartate 242, aspartate 244, and aspartate 246 each contribute to the Mg(2+) site. A Phosphoserine modification is found at serine 101.

Belongs to the phosphohexose mutase family. Mg(2+) serves as cofactor. Post-translationally, activated by phosphorylation.

It carries out the reaction alpha-D-glucosamine 1-phosphate = D-glucosamine 6-phosphate. Catalyzes the conversion of glucosamine-6-phosphate to glucosamine-1-phosphate. The chain is Phosphoglucosamine mutase from Rhodopseudomonas palustris (strain BisA53).